Consider the following 178-residue polypeptide: Oligoribonuclease (178 aa).

The Exonuclease domain occupies 7–168; the sequence is LIWIDLEMTG…DDIRESIAEL (162 aa). Tyrosine 128 is a catalytic residue.

Belongs to the oligoribonuclease family.

The protein resides in the cytoplasm. Its function is as follows. 3'-to-5' exoribonuclease specific for small oligoribonucleotides. This is Oligoribonuclease from Pseudomonas syringae pv. tomato (strain ATCC BAA-871 / DC3000).